Reading from the N-terminus, the 417-residue chain is Serine hydroxymethyltransferase (417 aa).

(6S)-5,6,7,8-tetrahydrofolate is bound by residues leucine 121 and 125 to 127 (GHL). Residue lysine 229 is modified to N6-(pyridoxal phosphate)lysine. 355–357 (SPF) lines the (6S)-5,6,7,8-tetrahydrofolate pocket.

This sequence belongs to the SHMT family. As to quaternary structure, homodimer. Requires pyridoxal 5'-phosphate as cofactor.

The protein localises to the cytoplasm. It catalyses the reaction (6R)-5,10-methylene-5,6,7,8-tetrahydrofolate + glycine + H2O = (6S)-5,6,7,8-tetrahydrofolate + L-serine. It functions in the pathway one-carbon metabolism; tetrahydrofolate interconversion. Its pathway is amino-acid biosynthesis; glycine biosynthesis; glycine from L-serine: step 1/1. Its function is as follows. Catalyzes the reversible interconversion of serine and glycine with tetrahydrofolate (THF) serving as the one-carbon carrier. This reaction serves as the major source of one-carbon groups required for the biosynthesis of purines, thymidylate, methionine, and other important biomolecules. Also exhibits THF-independent aldolase activity toward beta-hydroxyamino acids, producing glycine and aldehydes, via a retro-aldol mechanism. This chain is Serine hydroxymethyltransferase, found in Salmonella choleraesuis (strain SC-B67).